Reading from the N-terminus, the 171-residue chain is Nicotinamide-nucleotide adenylyltransferase (171 aa).

Belongs to the archaeal NMN adenylyltransferase family.

It is found in the cytoplasm. It carries out the reaction beta-nicotinamide D-ribonucleotide + ATP + H(+) = diphosphate + NAD(+). Its pathway is cofactor biosynthesis; NAD(+) biosynthesis; NAD(+) from nicotinamide D-ribonucleotide: step 1/1. This chain is Nicotinamide-nucleotide adenylyltransferase, found in Methanococcus maripaludis (strain DSM 14266 / JCM 13030 / NBRC 101832 / S2 / LL).